Reading from the N-terminus, the 478-residue chain is Transposase for insertion sequence element IS231C (478 aa).

It belongs to the transposase 11 family.

Functionally, involved in the transposition of the insertion sequence. In Bacillus thuringiensis subsp. berliner, this protein is Transposase for insertion sequence element IS231C.